The following is a 418-amino-acid chain: Serine hydroxymethyltransferase (418 aa).

(6S)-5,6,7,8-tetrahydrofolate contacts are provided by residues leucine 121 and 125-127 (GHL). At lysine 230 the chain carries N6-(pyridoxal phosphate)lysine. Residue 355–357 (SPF) coordinates (6S)-5,6,7,8-tetrahydrofolate.

Belongs to the SHMT family. Homodimer. Pyridoxal 5'-phosphate serves as cofactor.

It localises to the cytoplasm. The catalysed reaction is (6R)-5,10-methylene-5,6,7,8-tetrahydrofolate + glycine + H2O = (6S)-5,6,7,8-tetrahydrofolate + L-serine. It functions in the pathway one-carbon metabolism; tetrahydrofolate interconversion. The protein operates within amino-acid biosynthesis; glycine biosynthesis; glycine from L-serine: step 1/1. In terms of biological role, catalyzes the reversible interconversion of serine and glycine with tetrahydrofolate (THF) serving as the one-carbon carrier. This reaction serves as the major source of one-carbon groups required for the biosynthesis of purines, thymidylate, methionine, and other important biomolecules. Also exhibits THF-independent aldolase activity toward beta-hydroxyamino acids, producing glycine and aldehydes, via a retro-aldol mechanism. The sequence is that of Serine hydroxymethyltransferase from Streptococcus pyogenes serotype M18 (strain MGAS8232).